A 296-amino-acid polypeptide reads, in one-letter code: Tyrosine recombinase XerC (296 aa).

Residues 1-84 (MNKIQESFLY…TLRSFYEFWM (84 aa)) form the Core-binding (CB) domain. Residues 105–286 (YLPHFFYEEE…SNQQLRKVYL (182 aa)) form the Tyr recombinase domain. Residues arginine 145, lysine 169, histidine 238, arginine 241, and histidine 264 contribute to the active site. The active-site O-(3'-phospho-DNA)-tyrosine intermediate is tyrosine 273.

It belongs to the 'phage' integrase family. XerC subfamily. In terms of assembly, forms a cyclic heterotetrameric complex composed of two molecules of XerC and two molecules of XerD.

Its subcellular location is the cytoplasm. Its function is as follows. Site-specific tyrosine recombinase, which acts by catalyzing the cutting and rejoining of the recombining DNA molecules. The XerC-XerD complex is essential to convert dimers of the bacterial chromosome into monomers to permit their segregation at cell division. It also contributes to the segregational stability of plasmids. This is Tyrosine recombinase XerC from Staphylococcus carnosus (strain TM300).